Consider the following 388-residue polypeptide: Dual specificity mitogen-activated protein kinase kinase 1 (388 aa).

Residues 1–20 (PIQLNPAPDGSAVNGTSSAE) are disordered. The Protein kinase domain occupies 61–356 (FEKISELGAG…LKQLMIHAFI (296 aa)). ATP is bound by residues 67–75 (LGAGNGGVV) and lysine 90. Aspartate 183 functions as the Proton acceptor in the catalytic mechanism. 2 positions are modified to phosphoserine; by RAF: serine 211 and serine 215. Positions 275–299 (DSPVTETSPRQRAPGRPMSSYGSDS) are disordered.

Belongs to the protein kinase superfamily. STE Ser/Thr protein kinase family. MAP kinase kinase subfamily. MAPKK is itself dependent on Ser/Thr phosphorylation for activity catalyzed by MAP kinase kinase kinases (RAF or MEKK1).

It is found in the cytoplasm. The protein resides in the cytoskeleton. Its subcellular location is the microtubule organizing center. It localises to the centrosome. The protein localises to the spindle pole body. It is found in the nucleus. It catalyses the reaction L-seryl-[protein] + ATP = O-phospho-L-seryl-[protein] + ADP + H(+). The enzyme catalyses L-threonyl-[protein] + ATP = O-phospho-L-threonyl-[protein] + ADP + H(+). It carries out the reaction L-tyrosyl-[protein] + ATP = O-phospho-L-tyrosyl-[protein] + ADP + H(+). Functionally, dual specificity protein kinase which acts as an essential component of the MAP kinase signal transduction pathway. Binding of extracellular ligands such as growth factors, cytokines and hormones to their cell-surface receptors activates RAS and this initiates RAF1 activation. RAF1 then further activates the dual-specificity protein kinases MAP2K1/MEK1 and MAP2K2/MEK2. Both MAP2K1/MEK1 and MAP2K2/MEK2 function specifically in the MAPK/ERK cascade, and catalyze the concomitant phosphorylation of a threonine and a tyrosine residue in a Thr-Glu-Tyr sequence located in the extracellular signal-regulated kinases MAPK3/ERK1 and MAPK1/ERK2, leading to their activation and further transduction of the signal within the MAPK/ERK cascade. Depending on the cellular context, this pathway mediates diverse biological functions such as cell growth, adhesion, survival and differentiation predominantly through the regulation of transcription, metabolism and cytoskeletal rearrangements. This chain is Dual specificity mitogen-activated protein kinase kinase 1 (MAP2K1), found in Serinus canaria (Island canary).